A 292-amino-acid polypeptide reads, in one-letter code: Elongation factor Ts (292 aa).

Residues 80-83 (TDSV) form an involved in Mg(2+) ion dislocation from EF-Tu region.

Belongs to the EF-Ts family.

It localises to the cytoplasm. Its function is as follows. Associates with the EF-Tu.GDP complex and induces the exchange of GDP to GTP. It remains bound to the aminoacyl-tRNA.EF-Tu.GTP complex up to the GTP hydrolysis stage on the ribosome. This is Elongation factor Ts from Lactiplantibacillus plantarum (strain ATCC BAA-793 / NCIMB 8826 / WCFS1) (Lactobacillus plantarum).